The sequence spans 771 residues: Solute carrier family 7 member 14 (771 aa).

Helical transmembrane passes span 58 to 78, 83 to 103, 119 to 141, 187 to 207, 216 to 236, and 251 to 271; these read LISL…SGLV, AGPG…LSGV, AYTY…NLIL, YPDL…ALGV, VLNV…LFFI, and WSGV…FDII. The N-linked (GlcNAc...) asparagine glycan is linked to asparagine 282. A run of 4 helical transmembrane segments spans residues 291–311, 336–356, 384–404, and 407–427; these read ASLV…TLMV, FVVA…SLFP, PVVA…LVSL, and LIEM…VCVL. A phosphoserine mark is found at serine 465, serine 468, serine 475, and serine 488. The next 4 membrane-spanning stretches (helical) occupy residues 565 to 585, 596 to 616, 628 to 648, and 655 to 675; these read VTIC…FIIF, WAIL…FVIL, MAPC…YLML, and WIRF…YGIW. N-linked (GlcNAc...) asparagine glycosylation is present at asparagine 676. The segment at 735–771 is disordered; that stretch reads SDAKANSRTSSKAKSKSKHKQNSEALIANDELDCSPE. Basic residues predominate over residues 745–754; it reads SKAKSKSKHK. 2 positions are modified to phosphoserine: serine 757 and serine 769.

Belongs to the amino acid-polyamine-organocation (APC) superfamily. Expressed in retina, brain and spinal cord. In the retina, expressed in the inner nuclear layer and photoreceptor layer (at protein level). Expressed in liver, spleen, lung, kidney intestine and brain (at protein level).

It localises to the lysosome membrane. The catalysed reaction is 4-aminobutanoate(in) = 4-aminobutanoate(out). Imports 4-aminobutanoate (GABA) into lysosomes. May act as a GABA sensor that regulates mTORC2-dependent INS signaling and gluconeogenesis. The transport mechanism and substrate selectivity remain to be elucidated. The protein is Solute carrier family 7 member 14 of Mus musculus (Mouse).